A 342-amino-acid polypeptide reads, in one-letter code: Isopentenyl-diphosphate delta-isomerase (342 aa).

11-12 (RK) lines the substrate pocket. FMN contacts are provided by residues Ser68, 69-71 (SMT), Ser99, and Asn128. 99–101 (SQR) provides a ligand contact to substrate. Residue Gln162 coordinates substrate. Glu163 is a Mg(2+) binding site. Residues Lys194, Ser219, Thr224, 275–277 (GVR), and 296–297 (AK) each bind FMN.

This sequence belongs to the IPP isomerase type 2 family. In terms of assembly, homooctamer. Dimer of tetramers. FMN is required as a cofactor. It depends on NADPH as a cofactor. Mg(2+) serves as cofactor.

Its subcellular location is the cytoplasm. The catalysed reaction is isopentenyl diphosphate = dimethylallyl diphosphate. Functionally, involved in the biosynthesis of isoprenoids. Catalyzes the 1,3-allylic rearrangement of the homoallylic substrate isopentenyl (IPP) to its allylic isomer, dimethylallyl diphosphate (DMAPP). This is Isopentenyl-diphosphate delta-isomerase from Legionella pneumophila (strain Corby).